A 329-amino-acid polypeptide reads, in one-letter code: MNSETLPAELPATLTIASRESRLAMWQAEHVRDALRKLYPACDVKILGMTTRGDQILDRTLSKVGGKGLFVKELESALADGRADLAVHSLKDVPMVLPEGFALAAVMSREDPRDAFVSNDYASLDALPAGAVVGTSSLRREAMLRARHPRLDVRPLRGNLDTRLAKLDRGDYAAIILAAAGLKRLGLAARIRALLDVDDSLPAAGQGALGIEIAARRADVAAWLAPLHDHASALAVEAERAVSRALGGSCEVPLAAHAVWRGGELHLTGSVSTTDGARVLAAHAHARAATAADALALGRRVSDALERQGARAIVDALVAASAQAQKGGA.

Residue cysteine 250 is modified to S-(dipyrrolylmethanemethyl)cysteine.

This sequence belongs to the HMBS family. Monomer. The cofactor is dipyrromethane.

The catalysed reaction is 4 porphobilinogen + H2O = hydroxymethylbilane + 4 NH4(+). It functions in the pathway porphyrin-containing compound metabolism; protoporphyrin-IX biosynthesis; coproporphyrinogen-III from 5-aminolevulinate: step 2/4. Its function is as follows. Tetrapolymerization of the monopyrrole PBG into the hydroxymethylbilane pre-uroporphyrinogen in several discrete steps. The polypeptide is Porphobilinogen deaminase (Burkholderia pseudomallei (strain 668)).